The primary structure comprises 396 residues: Probable porphobilinogen deaminase (396 aa).

The tract at residues A159–Q224 is disordered. An insert region spans residues A159–P245. Residues L162–Y189 are compositionally biased toward basic and acidic residues. The segment covering L200–D215 has biased composition (acidic residues). C328 carries the S-(dipyrrolylmethanemethyl)cysteine modification.

This sequence belongs to the HMBS family. Dipyrromethane is required as a cofactor.

It carries out the reaction 4 porphobilinogen + H2O = hydroxymethylbilane + 4 NH4(+). It participates in porphyrin-containing compound metabolism; protoporphyrin-IX biosynthesis; coproporphyrinogen-III from 5-aminolevulinate: step 2/4. Functionally, tetrapolymerization of the monopyrrole PBG into the hydroxymethylbilane pre-uroporphyrinogen in several discrete steps. The protein is Probable porphobilinogen deaminase (hemC) of Halobacterium salinarum (strain ATCC 700922 / JCM 11081 / NRC-1) (Halobacterium halobium).